Here is an 839-residue protein sequence, read N- to C-terminus: MEKIYNHKIVEKDKNEKWIKKEYFSTHDLTKKPFSILLPPPNVTGKLHIGHAWNTTLQDFLIRLKRLQGYDVLWLPGTDHAGIATQAKVEKRLLDQKIFKSDLTKEELFEKAMDWKNEYANEIKKQWSKLGLALDYKKERFTLDELSNKAVNDIFVMLYKDGYIYRGNRAIYYDTFLQTSLSNIEVINVEKESKMYYLKYFLENSNSEYVLVATTRPETLASDVALIINPNDKKNSHYLGKNFVNPLTKKIIKMHSDDYAIMNFGSGIVKISAHDMNDFDVIKRLNLEVIETIDKFGKMTNAIPEFENMSSLEARENIVLKLKKENLIDKIENIKSNIIMSERSNTVAEVLVMPQWFIKMEPFSKMILKKIQNENEDDKKVLFFPKKFENILKIWMQEAHDWNISRQLWWGHKIPAWYDEKGNIKVQTTSPGSNWTQDQDVLDTWFSSGIAPFSFLNWPQKSEFLKRYYPTSVIVTAYDIIFFWVARMYFMGIYSMKNIPFKKALIHGLIRDEQGRKMSKSLGNGIDPMDLIEKYGADSLRWFLMTNSTPGQDIRFNYDKIESAWSLINKIWNISRYIKMLDSDKKEIIPEEIEQNANSWILEKFENLKILIYEKSETFEFSVIGKEIFKFINEDFSSVYIEIIKGTDSKEFISKIWSNFLILLHPFLPFLTDHLYFELNKKELLESDFFELKSRKNNLFIDETIEIISTLREYRTRFNLSHKIDLNYNLVSINNSNQCDFNLDLKKYLIKKMANANFSENGQIFFKLNNYELRLQIPEEVKKEEETIRIKRILFLESEIKRSQSILSNEKFINNASEIKVKEEKEKLEKYIKEFEEIK.

The 'HIGH' region motif lies at 41 to 51 (PNVTGKLHIGH). Positions 315 to 343 (RENIVLKLKKENLIDKIENIKSNIIMSER) form a coiled coil. The 'KMSKS' region motif lies at 517-521 (KMSKS). ATP is bound at residue Lys-520. Positions 813-839 (INNASEIKVKEEKEKLEKYIKEFEEIK) form a coiled coil.

It belongs to the class-I aminoacyl-tRNA synthetase family. ValS type 1 subfamily. Monomer.

It is found in the cytoplasm. The enzyme catalyses tRNA(Val) + L-valine + ATP = L-valyl-tRNA(Val) + AMP + diphosphate. In terms of biological role, catalyzes the attachment of valine to tRNA(Val). As ValRS can inadvertently accommodate and process structurally similar amino acids such as threonine, to avoid such errors, it has a 'posttransfer' editing activity that hydrolyzes mischarged Thr-tRNA(Val) in a tRNA-dependent manner. The polypeptide is Valine--tRNA ligase (Mycoplasma mobile (strain ATCC 43663 / 163K / NCTC 11711) (Mesomycoplasma mobile)).